Here is a 321-residue protein sequence, read N- to C-terminus: F-box protein At4g35930 (321 aa).

A compositionally biased stretch (basic and acidic residues) spans 1 to 13 (MGKVSPKDLDSKT). Residues 1–23 (MGKVSPKDLDSKTSVRKKKLKSS) form a disordered region. The F-box domain occupies 159 to 207 (ESQLESLPMDLLVKIVCHLHHDQLKAVFHVSQRIRMATILARQYHFNYT). The segment at 228 to 258 (WPFRRGDGNPTMVSSPHTPKAPKHAPRPPSR) is disordered.

The sequence is that of F-box protein At4g35930 from Arabidopsis thaliana (Mouse-ear cress).